The sequence spans 417 residues: Serine hydroxymethyltransferase (417 aa).

(6S)-5,6,7,8-tetrahydrofolate contacts are provided by residues L121 and 125 to 127 (GHL). The residue at position 229 (K229) is an N6-(pyridoxal phosphate)lysine. 355–357 (SPF) contacts (6S)-5,6,7,8-tetrahydrofolate.

Belongs to the SHMT family. Homodimer. Requires pyridoxal 5'-phosphate as cofactor.

It localises to the cytoplasm. It catalyses the reaction (6R)-5,10-methylene-5,6,7,8-tetrahydrofolate + glycine + H2O = (6S)-5,6,7,8-tetrahydrofolate + L-serine. It participates in one-carbon metabolism; tetrahydrofolate interconversion. Its pathway is amino-acid biosynthesis; glycine biosynthesis; glycine from L-serine: step 1/1. Functionally, catalyzes the reversible interconversion of serine and glycine with tetrahydrofolate (THF) serving as the one-carbon carrier. This reaction serves as the major source of one-carbon groups required for the biosynthesis of purines, thymidylate, methionine, and other important biomolecules. Also exhibits THF-independent aldolase activity toward beta-hydroxyamino acids, producing glycine and aldehydes, via a retro-aldol mechanism. In Serratia proteamaculans (strain 568), this protein is Serine hydroxymethyltransferase.